The sequence spans 356 residues: Dihydroorotate dehydrogenase (quinone) (356 aa).

FMN is bound by residues 66–70 (AGFDK) and Thr90. Lys70 lines the substrate pocket. 115-119 (NRMGF) provides a ligand contact to substrate. The FMN site is built by Asn143 and Asn176. Residue Asn176 coordinates substrate. The Nucleophile role is filled by Ser179. Asn181 lines the substrate pocket. FMN-binding residues include Lys212 and Thr240. Substrate is bound at residue 241-242 (NT). Residues Gly266, Gly295, and 316–317 (YT) contribute to the FMN site.

This sequence belongs to the dihydroorotate dehydrogenase family. Type 2 subfamily. As to quaternary structure, monomer. FMN serves as cofactor.

The protein localises to the cell membrane. The enzyme catalyses (S)-dihydroorotate + a quinone = orotate + a quinol. It participates in pyrimidine metabolism; UMP biosynthesis via de novo pathway; orotate from (S)-dihydroorotate (quinone route): step 1/1. Catalyzes the conversion of dihydroorotate to orotate with quinone as electron acceptor. In Rhodococcus opacus (strain B4), this protein is Dihydroorotate dehydrogenase (quinone).